The following is a 474-amino-acid chain: Hepatocyte nuclear factor 4-alpha (474 aa).

A DNA-binding region (nuclear receptor) is located at residues 57 to 132 (SALCAICGDR…AGMKKEAVQN (76 aa)). 2 consecutive NR C4-type zinc fingers follow at residues 60–80 (CAICGDRATGKHYGASSCDGC) and 96–120 (CRFSRQCVVDKDKRNQCRYCRLKKC). Serine 142 and serine 143 each carry phosphoserine; by PKA. Tyrosine 144 carries the phosphotyrosine modification. One can recognise an NR LBD domain in the interval 147 to 377 (SSLPSINALL…NLLQEMLLGG (231 aa)). Threonine 166 carries the post-translational modification Phosphothreonine. Phosphoserine is present on serine 167. Residues lysine 234 and lysine 307 each participate in a glycyl lysine isopeptide (Lys-Gly) (interchain with G-Cter in ubiquitin) cross-link. Serine 313 is subject to Phosphoserine; by AMPK. The 9aaTAD motif lies at 368-376 (NLLQEMLLG). Residues 413–450 (SNGQMCEWPRPRGQAATPETPQPSPPSGSGSESYKLLP) are disordered. Phosphothreonine is present on residues threonine 429 and threonine 432. A Phosphoserine modification is found at serine 436. Lysine 458 carries the N6-acetyllysine modification.

This sequence belongs to the nuclear hormone receptor family. NR2 subfamily. Homodimerization is required for HNF4-alpha to bind to its recognition site. Interacts with CLOCK, BMAL1, CRY1, CRY2, PER1 and PER2. Interacts with NR0B2/SHP; the resulting heterodimer is transcriptionally inactive. Interacts with DDX3X; this interaction disrupts the interaction between HNF4 and NR0B2 that forms inactive heterodimers and enhances the formation of active HNF4 homodimers. Post-translationally, phosphorylation at Ser-313 by AMPK reduces the ability to form homodimers and bind DNA. Phosphorylated in the recognition sequence R-R-S-S near the DNA-binding domain; phosphorylation results in decrease in DNA-binding activity. Phosphorylation of HNF4 depends on the diet and is decreased by a carbohydrate-rich diet and is increased by fasting. The N-terminus is blocked. In terms of processing, acetylation at Lys-458 lowers transcriptional activation by about two-fold. In terms of tissue distribution, liver, kidney and intestine.

It localises to the nucleus. Its function is as follows. Transcriptional regulator which controls the expression of hepatic genes during the transition of endodermal cells to hepatic progenitor cells, facilitating the recruitment of RNA pol II to the promoters of target genes. Activates the transcription of CYP2C38. Represses the CLOCK-BMAL1 transcriptional activity and is essential for circadian rhythm maintenance and period regulation in the liver and colon cells. This Rattus norvegicus (Rat) protein is Hepatocyte nuclear factor 4-alpha (Hnf4a).